A 1052-amino-acid polypeptide reads, in one-letter code: Focal adhesion kinase 1 (1052 aa).

Residues 1 to 27 (MAAAYLDPNLNHTPSSSTKTHLGTGME) are disordered. The residue at position 2 (alanine 2) is an N-acetylalanine. The residue at position 5 (tyrosine 5) is a Phosphotyrosine. Positions 10–21 (LNHTPSSSTKTH) are enriched in polar residues. Threonine 13 is modified (phosphothreonine). Phosphoserine is present on residues serine 29 and serine 54. One can recognise an FERM domain in the interval 35–355 (RVLKVFHYFE…GYCRLVNGAT (321 aa)). Lysine 152 participates in a covalent cross-link: Glycyl lysine isopeptide (Lys-Gly) (interchain with G-Cter in SUMO). Tyrosine 397 and tyrosine 407 each carry phosphotyrosine. At tyrosine 397 the chain carries Phosphotyrosine; by autocatalysis. ATP contacts are provided by residues 428–434 (IGEGQFG), lysine 454, and 500–502 (ELC). One can recognise a Protein kinase domain in the interval 431 to 680 (GQFGDVHQGV…ELKAQLSTIL (250 aa)). The active-site Proton acceptor is aspartate 546. Tyrosine 570 carries the phosphotyrosine modification. Residues tyrosine 576 and tyrosine 577 each carry the phosphotyrosine; by RET and SRC modification. A Phosphoserine modification is found at serine 580. Residues 685–697 (VQQEERMRMESRR) show a composition bias toward basic and acidic residues. 2 disordered regions span residues 685–734 (VQQE…PSPQ) and 837–921 (VRLS…DRSN). Residues 707–1052 (GSDEAPPKPS…LKMLGQTRPH (346 aa)) form an interaction with TGFB1I1 region. Residue serine 722 is modified to Phosphoserine. Serine 732 carries the phosphoserine; by CDK5 modification. Basic and acidic residues predominate over residues 837 to 849 (VRLSRGSIDREDG). Serine 843 carries the post-translational modification Phosphoserine. Phosphotyrosine is present on tyrosine 861. The segment covering 869 to 880 (PAAPPKKPPRPG) has biased composition (pro residues). Residues 886-896 (SNLSSISSPAD) show a composition bias toward polar residues. At serine 910 the chain carries Phosphoserine. Residues 912–1052 (PPTANLDRSN…LKMLGQTRPH (141 aa)) are interaction with ARHGEF28. Residue threonine 914 is modified to Phosphothreonine. Position 925 is a phosphotyrosine; by SRC (tyrosine 925).

Belongs to the protein kinase superfamily. Tyr protein kinase family. FAK subfamily. Interacts with GIT1. Component of a complex that contains at least FER, CTTN and PTK2/FAK1. Interacts with BMX. Interacts with STEAP4. Interacts with ZFYVE21. Interacts with ESR1. Interacts with FGR, FLT4 and RET. Interacts with EPHA2 in resting cells; activation of EPHA2 recruits PTPN11, leading to dephosphorylation of PTK2/FAK1 and dissociation of the complex. Interacts with EPHA1 (kinase activity-dependent). Interacts with MISP. Interacts with PIAS1. Interacts with ARHGAP26 and SHC1. Interacts with RB1CC1; this inhibits PTK2/FAK1 activity and activation of downstream signaling pathways. Interacts with P53/TP53. Interacts with STAT1. Interacts with WASL. Interacts with ARHGEF7. Interacts with DCC. Interacts (via first Pro-rich region) with CAS family members (via SH3 domain), including BCAR1, BCAR3 and CASS4. Interacts with NEDD9 (via C-terminus). Interacts with SORBS1. Interacts with ARHGEF28. Interacts with SHB. Part of a complex composed of THSD1, PTK2/FAK1, TLN1 and VCL. Interacts with PXN and TLN1. Interacts with TGFB1I1. Interacts with PIK3R1 or PIK3R2. Interacts with SRC, GRB2 and GRB7. Interacts with LPXN (via LD motif 3). Interacts with CD36. Interacts with EMP2; regulates PTK2 activation and localization. Interacts with DSCAM. Interacts with AMBRA1. Interacts (when tyrosine-phosphorylated) with tensin TNS1; the interaction is increased by phosphorylation of TNS1. Phosphorylated on tyrosine residues upon activation, e.g. upon integrin signaling. Tyr-397 is the major autophosphorylation site, but other kinases can also phosphorylate this residue. Phosphorylation at Tyr-397 promotes interaction with SRC and SRC family members, leading to phosphorylation at Tyr-576, Tyr-577 and at additional tyrosine residues. FGR promotes phosphorylation at Tyr-397 and Tyr-576. FER promotes phosphorylation at Tyr-577, Tyr-861 and Tyr-925, even when cells are not adherent. Tyr-397, Tyr-576 and Ser-722 are phosphorylated only when cells are adherent. Phosphorylation at Tyr-397 is important for interaction with BMX, PIK3R1 and SHC1. Phosphorylation at Tyr-925 is important for interaction with GRB2. Dephosphorylated by PTPN11; PTPN11 is recruited to PTK2 via EPHA2 (tyrosine phosphorylated). Microtubule-induced dephosphorylation at Tyr-397 is crucial for the induction of focal adhesion disassembly; this dephosphorylation could be catalyzed by PTPN11 and regulated by ZFYVE21. Phosphorylation on tyrosine residues is enhanced by NTN1. Post-translationally, sumoylated; this enhances autophosphorylation.

It is found in the cell junction. The protein resides in the focal adhesion. It localises to the cell membrane. Its subcellular location is the cytoplasm. The protein localises to the perinuclear region. It is found in the cell cortex. The protein resides in the cytoskeleton. It localises to the microtubule organizing center. Its subcellular location is the centrosome. The protein localises to the nucleus. It is found in the cilium basal body. It carries out the reaction L-tyrosyl-[protein] + ATP = O-phospho-L-tyrosyl-[protein] + ADP + H(+). Subject to autoinhibition, mediated by interactions between the FERM domain and the kinase domain. Activated by autophosphorylation at Tyr-397. This promotes interaction with SRC and phosphorylation at Tyr-576 and Tyr-577 in the kinase activation loop by SRC. Phosphorylation at Tyr-397, Tyr-576 and Tyr-577 is required for maximal kinase activity. Functionally, non-receptor protein-tyrosine kinase that plays an essential role in regulating cell migration, adhesion, spreading, reorganization of the actin cytoskeleton, formation and disassembly of focal adhesions and cell protrusions, cell cycle progression, cell proliferation and apoptosis. Required for early embryonic development and placenta development. Required for embryonic angiogenesis, normal cardiomyocyte migration and proliferation, and normal heart development. Regulates axon growth and neuronal cell migration, axon branching and synapse formation; required for normal development of the nervous system. Plays a role in osteogenesis and differentiation of osteoblasts. Functions in integrin signal transduction, but also in signaling downstream of numerous growth factor receptors, G-protein coupled receptors (GPCR), EPHA2, netrin receptors and LDL receptors. Forms multisubunit signaling complexes with SRC and SRC family members upon activation; this leads to the phosphorylation of additional tyrosine residues, creating binding sites for scaffold proteins, effectors and substrates. Regulates numerous signaling pathways. Promotes activation of phosphatidylinositol 3-kinase and the AKT1 signaling cascade. Promotes activation of MAPK1/ERK2, MAPK3/ERK1 and the MAP kinase signaling cascade. Promotes localized and transient activation of guanine nucleotide exchange factors (GEFs) and GTPase-activating proteins (GAPs), and thereby modulates the activity of Rho family GTPases. Signaling via CAS family members mediates activation of RAC1. Phosphorylates NEDD9 following integrin stimulation. Recruits the ubiquitin ligase MDM2 to P53/TP53 in the nucleus, and thereby regulates P53/TP53 activity, P53/TP53 ubiquitination and proteasomal degradation. Phosphorylates SRC; this increases SRC kinase activity. Phosphorylates ACTN1, ARHGEF7, GRB7, RET and WASL. Promotes phosphorylation of PXN and STAT1; most likely PXN and STAT1 are phosphorylated by a SRC family kinase that is recruited to autophosphorylated PTK2/FAK1, rather than by PTK2/FAK1 itself. Promotes phosphorylation of BCAR1; GIT2 and SHC1; this requires both SRC and PTK2/FAK1. Promotes phosphorylation of BMX and PIK3R1. In terms of biological role, does not contain a kinase domain and inhibits PTK2/FAK1 phosphorylation and signaling. Its enhanced expression can attenuate the nuclear accumulation of LPXN and limit its ability to enhance serum response factor (SRF)-dependent gene transcription. The sequence is that of Focal adhesion kinase 1 from Mus musculus (Mouse).